Here is a 361-residue protein sequence, read N- to C-terminus: tRNA-specific 2-thiouridylase MnmA (361 aa).

ATP-binding positions include 11–18 and Met-37; that span reads GMSGGVDS. The active-site Nucleophile is the Cys-106. Cys-106 and Cys-202 are joined by a disulfide. Gly-130 lines the ATP pocket. The segment at 152 to 154 is interaction with tRNA; sequence KDQ. The Cysteine persulfide intermediate role is filled by Cys-202. Positions 308–309 are interaction with tRNA; the sequence is RY.

Belongs to the MnmA/TRMU family.

The protein resides in the cytoplasm. It catalyses the reaction S-sulfanyl-L-cysteinyl-[protein] + uridine(34) in tRNA + AH2 + ATP = 2-thiouridine(34) in tRNA + L-cysteinyl-[protein] + A + AMP + diphosphate + H(+). Its function is as follows. Catalyzes the 2-thiolation of uridine at the wobble position (U34) of tRNA, leading to the formation of s(2)U34. This chain is tRNA-specific 2-thiouridylase MnmA, found in Clostridium botulinum (strain Eklund 17B / Type B).